The chain runs to 410 residues: Putative formamidase C869.04 (410 aa).

This sequence belongs to the acetamidase/formamidase family. As to quaternary structure, homotrimer.

The protein resides in the cytoplasm. It localises to the nucleus. The catalysed reaction is formamide + H2O = formate + NH4(+). Hydrolyzes formamide with the production of ammonia which can be used as a source of nitrogen for growth. May also act on acetamide, propanamide and butanamide. The chain is Putative formamidase C869.04 from Schizosaccharomyces pombe (strain 972 / ATCC 24843) (Fission yeast).